Here is a 509-residue protein sequence, read N- to C-terminus: 5-OH-xanthotoxin synthase (509 aa).

Residues 5–25 traverse the membrane as a helical segment; it reads AVVILLILAFPIASVYVLFYH. Positions 368 to 373 are substrate specificity; the sequence is TGALLI. Cysteine 449 contributes to the heme binding site.

Belongs to the cytochrome P450 family. Heme serves as cofactor.

It localises to the microsome membrane. The enzyme catalyses xanthotoxin + reduced [NADPH--hemoprotein reductase] + O2 = 5-hydroxyxanthotoxin + oxidized [NADPH--hemoprotein reductase] + H2O + 2 H(+). It participates in secondary metabolite biosynthesis. Its function is as follows. Involved in the biosynthesis of coumarins and furanocoumarins (FCs), natural products required for defense responses against attacks by predators with potential medical and agroindustrial usages such as anticoagulant, rodenticide and artificial vanilla substitutes. Catalyzes the conversion of xanthotoxin into 5-hydroxyxanthotoxin. The chain is 5-OH-xanthotoxin synthase from Ammi majus (Bishop's weed).